A 738-amino-acid chain; its full sequence is Conserved oligomeric Golgi complex subunit 2 (738 aa).

2 disordered regions span residues 474-504 and 668-687; these read IKKP…ETKP and KQAR…GMSD. Residues 483–500 are compositionally biased toward polar residues; it reads KEPSITQGNTEDQGSGPS.

This sequence belongs to the COG2 family. Component of the conserved oligomeric Golgi complex which is composed of eight different subunits and is required for normal Golgi morphology and localization.

The protein localises to the golgi apparatus membrane. Required for normal Golgi morphology and function. In Homo sapiens (Human), this protein is Conserved oligomeric Golgi complex subunit 2 (COG2).